The primary structure comprises 213 residues: MLACIACSSKEGGEDGSRGAATPHGRDAVKSLTSQLKDMVLKFSGSNKHQHYKAATAGSPSFRSRSYRRPYPGFIDDSAFMTTTRPGGEAYMYTRAAPPPPVRAASTSMATWDMTRSKSNRGWQQDAGRSPGGTTWIQSIEEEAGADDVTVVEDAVPREWTAQVEPGVQITFVTLPGGGNDLKRIRFSRERFGEDRAKVWWEHNRDRIQAQYL.

The disordered stretch occupies residues 7–27 (CSSKEGGEDGSRGAATPHGRD). Residues 158–213 (REWTAQVEPGVQITFVTLPGGGNDLKRIRFSRERFGEDRAKVWWEHNRDRIQAQYL) enclose the BRX domain.

Belongs to the BRX family.

The protein localises to the nucleus. The protein is Putative protein Brevis radix-like 3 (BRXL3) of Oryza sativa subsp. japonica (Rice).